The sequence spans 75 residues: Alpha-elapitoxin-Bc2c (75 aa).

An N-terminal signal peptide occupies residues 1 to 2 (YT). 5 disulfides stabilise this stretch: Cys-5–Cys-24, Cys-17–Cys-45, Cys-30–Cys-34, Cys-49–Cys-60, and Cys-61–Cys-66.

Belongs to the three-finger toxin family. Long-chain subfamily. Type II alpha-neurotoxin sub-subfamily. In terms of assembly, monomer in solution, homodimer in crystal state. In terms of tissue distribution, expressed by the venom gland.

Its subcellular location is the secreted. In terms of biological role, binds to muscular and neuronal nicotinic acetylcholine receptor (nAChR) and inhibits acetylcholine from binding to the receptor, thereby impairing neuromuscular and neuronal transmission. Blocks muscle type nAChR. Also binds with high affinity to alpha-7/CHRNA7 nAChRs. In addition, shows a weak inhibition of neuronal alpha-3-beta-2/CHRNA3-CHRNB2 nAChR. Selectively binds to alpha-1-delta subunit interface of the mouse muscle nicotinic acetylcholine receptor, with a 10-fold higher affinity for the adult than for the fetal receptors. In vivo, when intraperitoneally injected into mice, causes flaccid paralysis and respiratory distress, followed by death within 2-4 hours. The protein is Alpha-elapitoxin-Bc2c of Bungarus candidus (Malayan krait).